A 243-amino-acid polypeptide reads, in one-letter code: Beta-glucanase (243 aa).

The signal sequence occupies residues 1-27; sequence MSYRVKRMLMLLVTGLFLSLSTFAASA. Positions 29–243 constitute a GH16 domain; it reads AQTGGSFYEP…SLHWVRYTKR (215 aa). C61 and C90 are disulfide-bonded. E134 acts as the Nucleophile in catalysis. The Proton donor role is filled by E138.

Belongs to the glycosyl hydrolase 16 family.

The enzyme catalyses Hydrolysis of (1-&gt;4)-beta-D-glucosidic linkages in beta-D-glucans containing (1-&gt;3)- and (1-&gt;4)-bonds.. The polypeptide is Beta-glucanase (bg1) (Bacillus licheniformis).